We begin with the raw amino-acid sequence, 304 residues long: Dihydroorotate dehydrogenase B (NAD(+)), catalytic subunit (304 aa).

Residues S22 and 46 to 47 contribute to the FMN site; that span reads KG. Substrate is bound by residues K46 and 70–74; that span reads NAIGL. Residues N100 and N128 each coordinate FMN. Residue N128 participates in substrate binding. The Nucleophile role is filled by C131. The FMN site is built by K166 and I192. 193–194 provides a ligand contact to substrate; that stretch reads NT. Residues G218, 244–245, and 266–267 contribute to the FMN site; these read GG and GT.

Belongs to the dihydroorotate dehydrogenase family. Type 1 subfamily. Heterotetramer of 2 PyrK and 2 PyrD type B subunits. FMN serves as cofactor.

The protein resides in the cytoplasm. It carries out the reaction (S)-dihydroorotate + NAD(+) = orotate + NADH + H(+). Its pathway is pyrimidine metabolism; UMP biosynthesis via de novo pathway; orotate from (S)-dihydroorotate (NAD(+) route): step 1/1. In terms of biological role, catalyzes the conversion of dihydroorotate to orotate with NAD(+) as electron acceptor. This is Dihydroorotate dehydrogenase B (NAD(+)), catalytic subunit (pyrD) from Trichlorobacter lovleyi (strain ATCC BAA-1151 / DSM 17278 / SZ) (Geobacter lovleyi).